The sequence spans 204 residues: Double homeobox protein A (204 aa).

The homeobox 1 DNA-binding region spans 15-74; that stretch reads HRRCRTKFTEEQLKILINTFNQKPYPGYATKQKLALEINTEESRIQIWFQNRRARHGFQK. Disordered regions lie at residues 73–101 and 163–204; these read QKRP…SREA and EPVA…ARTW. The segment covering 81 to 90 has biased composition (polar residues); it reads LESSQSQGQD. A DNA-binding region (homeobox 2) is located at residues 101–160; sequence ARRCRTTYSASQLHTLIKAFMKNPYPGIDSREELAKEIGVPESRVQIWFQNRRSRLLLQR. A compositionally biased stretch (polar residues) spans 184–197; the sequence is EDTQNGTNFTSDSH.

The protein belongs to the paired homeobox family. Expressed in embryonic stem cells.

Its subcellular location is the nucleus. Transcription factor that acts as a repressor. The polypeptide is Double homeobox protein A (Homo sapiens (Human)).